Reading from the N-terminus, the 329-residue chain is UDP-N-acetylenolpyruvoylglucosamine reductase (329 aa).

The region spanning 28 to 192 (RVGGPADLLC…ARVEVRLHAG (165 aa)) is the FAD-binding PCMH-type domain. Residue R172 is part of the active site. The disordered stretch occupies residues 202–227 (REDRERRRATQPLDRPTFGSTFTNPP). S221 serves as the catalytic Proton donor. Residue E291 is part of the active site. A disordered region spans residues 307 to 329 (DGHAAAGGGPGAASGGVRPPEAT). The segment covering 311 to 320 (AAGGGPGAAS) has biased composition (gly residues).

The protein belongs to the MurB family. It depends on FAD as a cofactor.

Its subcellular location is the cytoplasm. The enzyme catalyses UDP-N-acetyl-alpha-D-muramate + NADP(+) = UDP-N-acetyl-3-O-(1-carboxyvinyl)-alpha-D-glucosamine + NADPH + H(+). It functions in the pathway cell wall biogenesis; peptidoglycan biosynthesis. Its function is as follows. Cell wall formation. This is UDP-N-acetylenolpyruvoylglucosamine reductase from Anaeromyxobacter sp. (strain K).